The sequence spans 577 residues: Protein GPR108 (577 aa).

Positions 1 to 34 (MAVSERRGLSGESPAQCRWEYLSLLVLMLSGCSG) are cleaved as a signal peptide. 2 N-linked (GlcNAc...) asparagine glycosylation sites follow: N59 and N111. The tract at residues 144 to 224 (LLPEAPSQSG…TRGPSGKEKD (81 aa)) is disordered. Residues N233 and N237 are each glycosylated (N-linked (GlcNAc...) asparagine). 7 helical membrane passes run 296 to 316 (LYLI…SVLC), 325 to 345 (IHWL…FHSI), 369 to 389 (LLKG…WAFV), 400 to 420 (IFGI…VIES), 434 to 454 (ILFL…VWSI), 482 to 502 (VMVI…RVAV), and 506 to 526 (WQWL…VLTG).

It belongs to the LU7TM family.

It is found in the golgi apparatus. The protein localises to the cis-Golgi network membrane. It localises to the trans-Golgi network membrane. The protein resides in the golgi apparatus membrane. May play a role in intracellular immune modulation by activating NF-kappaB response and attenuating Toll-like-receptor response. This is Protein GPR108 (Gpr108) from Rattus norvegicus (Rat).